The chain runs to 764 residues: 5-methyltetrahydropteroyltriglutamate--homocysteine methyltransferase (764 aa).

5-methyltetrahydropteroyltri-L-glutamate is bound by residues 16–19 (RELK) and K121. Residues 440 to 442 (IGS) and E493 each bind L-homocysteine. Residues 440 to 442 (IGS) and E493 contribute to the L-methionine site. 5-methyltetrahydropteroyltri-L-glutamate contacts are provided by residues 524 to 525 (RC) and W570. D608 serves as a coordination point for L-homocysteine. L-methionine is bound at residue D608. E614 is a binding site for 5-methyltetrahydropteroyltri-L-glutamate. Residues H650, C652, and E674 each coordinate Zn(2+). The active-site Proton donor is H703. C735 is a binding site for Zn(2+).

Belongs to the vitamin-B12 independent methionine synthase family. The cofactor is Zn(2+).

It carries out the reaction 5-methyltetrahydropteroyltri-L-glutamate + L-homocysteine = tetrahydropteroyltri-L-glutamate + L-methionine. The protein operates within amino-acid biosynthesis; L-methionine biosynthesis via de novo pathway; L-methionine from L-homocysteine (MetE route): step 1/1. Its function is as follows. Catalyzes the transfer of a methyl group from 5-methyltetrahydrofolate to homocysteine resulting in methionine formation. The protein is 5-methyltetrahydropteroyltriglutamate--homocysteine methyltransferase of Burkholderia lata (strain ATCC 17760 / DSM 23089 / LMG 22485 / NCIMB 9086 / R18194 / 383).